A 457-amino-acid chain; its full sequence is uncharacterized protein (457 aa).

In terms of domain architecture, TRAM spans 10–69; it reads ALLQGQTVTVPITALAAGGDGIARLTDGRVLFVAGAVPGDTVEARLVHLKKDHGFGKILQ. Cys82, Cys88, Cys91, and Cys170 together coordinate [4Fe-4S] cluster. 4 residues coordinate S-adenosyl-L-methionine: Gln294, Tyr323, Glu344, and Asp387. Cys414 acts as the Nucleophile in catalysis.

Belongs to the class I-like SAM-binding methyltransferase superfamily. RNA M5U methyltransferase family.

This is an uncharacterized protein from Gloeobacter violaceus (strain ATCC 29082 / PCC 7421).